Reading from the N-terminus, the 1529-residue chain is ATP-dependent permease PDR15 (1529 aa).

Residues 1–13 (MSSDIRDVEERNS) are compositionally biased toward basic and acidic residues. The segment at 1–38 (MSSDIRDVEERNSRSSSSSSSSNSAAQSIGQHPYRGFD) is disordered. Residues 1-531 (MSSDIRDVEE…NFWRMKQSAS (531 aa)) lie on the Cytoplasmic side of the membrane. Residues 14-24 (RSSSSSSSSNS) are compositionally biased toward low complexity. Positions 171–420 (LRLLKPSKEE…FQDMGYYCPP (250 aa)) constitute an ABC transporter 1 domain. A helical transmembrane segment spans residues 532-552 (VTLWQVIGNSVMAFILGSMFY). The Extracellular portion of the chain corresponds to 553–567 (KVMKKNDTSTFYFRG). A glycan (N-linked (GlcNAc...) asparagine) is linked at N558. A helical membrane pass occupies residues 568-588 (AAMFFAILFNAFSCLLEIFSL). The Cytoplasmic segment spans residues 589 to 617 (YETRPITEKHRTYSLYHPSADAFASVLSE). The chain crosses the membrane as a helical span at residues 618–638 (MPPKLITAVCFNIIFYFLVDF). At 639–642 (RRNG) the chain is on the extracellular side. Residues 643 to 663 (GVFFFYFLINVIATFTLSHLF) traverse the membrane as a helical segment. The Cytoplasmic segment spans residues 664 to 699 (RCVGSLTKTLQEAMVPASMLLLAISMYTGFAIPKTK). A helical membrane pass occupies residues 700-720 (ILGWSIWIWYINPLAYLFESL). Over 721 to 783 (MINEFHDRRF…YDYEHKHKWR (63 aa)) the chain is Extracellular. A glycan (N-linked (GlcNAc...) asparagine) is linked at N744. The chain crosses the membrane as a helical span at residues 784 to 804 (GFGIGMAYVVFFFFVYLILCE). At 805 to 1219 (YNEGAKQKGE…LFQQYWRSPD (415 aa)) the chain is on the cytoplasmic side. Over residues 829–840 (EGKLQEKHRPGD) the composition is skewed to basic and acidic residues. The segment at 829–873 (EGKLQEKHRPGDIENNAGSSPDSATTEKKILDDSSEGSDSSSDNA) is disordered. The region spanning 884–1127 (FHWRDLCYDV…MIDYFESKGA (244 aa)) is the ABC transporter 2 domain. Residue 920-927 (GASGAGKT) coordinates ATP. A helical membrane pass occupies residues 1220–1240 (YLWSKFILTIFNQVFIGFTFF). Over 1241–1312 (KADRSLQGLQ…VEIPWNILAG (72 aa)) the chain is Extracellular. A helical membrane pass occupies residues 1313-1333 (TIAYCIYYYAVGFYANASAAG). The Cytoplasmic portion of the chain corresponds to 1334–1340 (QLHERGA). Residues 1341–1361 (LFWLFSIAFYVYIGSMGLLMI) traverse the membrane as a helical segment. Residues 1362-1368 (SFNEVAE) are Extracellular-facing. The chain crosses the membrane as a helical span at residues 1369–1389 (TAAHMGTLLFTMALSFCGVMA). Topologically, residues 1390-1396 (TPKVMPR) are cytoplasmic. The chain crosses the membrane as a helical span at residues 1397–1417 (FWIFMYRVSPLTYMIDALLAL). Over 1418–1492 (GVANVDVKCS…SSHYYRRWRN (75 aa)) the chain is Extracellular. A helical transmembrane segment spans residues 1493 to 1513 (YGIFICYIAFDYIAATFLYWL). Topologically, residues 1514 to 1529 (SRVPKKNGKISEKPKK) are cytoplasmic.

Belongs to the ABC transporter superfamily. ABCG family. PDR (TC 3.A.1.205) subfamily.

Its subcellular location is the membrane. The chain is ATP-dependent permease PDR15 (PDR15) from Saccharomyces cerevisiae (strain ATCC 204508 / S288c) (Baker's yeast).